The chain runs to 208 residues: Urease accessory protein UreG 2 (208 aa).

Position 16–23 (16–23 (GPVGSGKT)) interacts with GTP.

Belongs to the SIMIBI class G3E GTPase family. UreG subfamily. As to quaternary structure, homodimer. UreD, UreF and UreG form a complex that acts as a GTP-hydrolysis-dependent molecular chaperone, activating the urease apoprotein by helping to assemble the nickel containing metallocenter of UreC. The UreE protein probably delivers the nickel.

It localises to the cytoplasm. Facilitates the functional incorporation of the urease nickel metallocenter. This process requires GTP hydrolysis, probably effectuated by UreG. This chain is Urease accessory protein UreG 2, found in Methylobacterium radiotolerans (strain ATCC 27329 / DSM 1819 / JCM 2831 / NBRC 15690 / NCIMB 10815 / 0-1).